The chain runs to 324 residues: Antihemorrhagic factor cMSF (324 aa).

An N-terminal signal peptide occupies residues 1-19; that stretch reads MHFLVALVLLGQIIGSTLS. Cystatin fetuin-A-type domains follow at residues 22–130 and 141–254; these read VRGD…VKCH and RNCL…SDCV. The Cell attachment site signature appears at 23–25; the sequence is RGD. Disulfide bonds link Cys-28-Cys-315, Cys-85-Cys-96, Cys-110-Cys-129, Cys-143-Cys-146, Cys-205-Cys-217, Cys-230-Cys-253, and Cys-287-Cys-291. The N-linked (GlcNAc...) asparagine glycan is linked to Asn-204. Asn-282 is a glycosylation site (N-linked (GlcNAc...) asparagine).

As to quaternary structure, homodimer. As to expression, expressed by the liver.

The protein localises to the secreted. In terms of biological role, suppress hemorrhage induced by metalloproteinases from the same venom (brevilysin-H3, -H4, -H6) and from habu venom (metalloproteinases HR1A and HR1B). The non-hemorrhagic brevilysin-L4 is not inhibited by cMSF. Does not inhibit serine and cysteine proteases such as trypsin, chymotrypsin, thermolysin, and papain. The inhibition may occur by formation of a non-covalent complex between this protein and the proteinases at their metalloproteinase domains. The polypeptide is Antihemorrhagic factor cMSF (Gloydius brevicauda (Korean slamosa snake)).